The sequence spans 138 residues: 16 kDa phloem protein 2 (138 aa).

Residues 1 to 108 form the C2 domain; sequence MGMGMMEVHL…LAEGVRKGWS (108 aa). 5 residues coordinate Ca(2+): aspartate 20, aspartate 27, aspartate 78, aspartate 80, and aspartate 86.

Requires Ca(2+) as cofactor. In terms of tissue distribution, sieve elements of leaves, stems, roots and flowers.

Functionally, binds to both sense and antisense RNA. Interacts with mesophyll plasmodesmata to mediate its own cell-to-cell transport and potentiate RNA trafficking. This Cucurbita maxima (Pumpkin) protein is 16 kDa phloem protein 2 (PP16-2).